A 70-amino-acid chain; its full sequence is UPF0352 protein PSHAa1818 (70 aa).

Belongs to the UPF0352 family.

The protein is UPF0352 protein PSHAa1818 of Pseudoalteromonas translucida (strain TAC 125).